The chain runs to 511 residues: Vesicular acetylcholine transporter (511 aa).

Residues 1 to 36 (MAVGQAKAAMGKISSAIGERSKRISGAMNEPRRKRK) lie on the Cytoplasmic side of the membrane. A helical transmembrane segment spans residues 37 to 57 (ILLVIVCIAMLLDNMLYMVIV). Over 58–108 (PIIPNYLETIRTYKLVYITTPSNGTNGSLLNSTQRAVLERNPNANEDIQIG) the chain is Lumenal, vesicle. N-linked (GlcNAc...) asparagine glycosylation is found at asparagine 80, asparagine 83, and asparagine 88. Residues 109–129 (VLFASKAILQLLSNPFTGTFI) form a helical membrane-spanning segment. Topologically, residues 130–135 (DRVGYD) are cytoplasmic. Residues 136–156 (IPLLIGLTIMFFSTITFAFGE) traverse the membrane as a helical segment. Residues 157-165 (SYAILFAAR) lie on the Lumenal, vesicle side of the membrane. Residues 166–186 (SLQGLGSAFADTSGIAMIADK) traverse the membrane as a helical segment. Over 187-197 (YTEESERTQAL) the chain is Cytoplasmic. A helical membrane pass occupies residues 198–218 (GIALAFISFGSLVAPPFGGVL). The Lumenal, vesicle portion of the chain corresponds to 219–225 (YQFAGKW). Residues 226-246 (VPFLVLSFVCLLDGILLLMVV) form a helical membrane-spanning segment. Residues 247–267 (TPFASRTRVNTLQGTPIYKLM) lie on the Cytoplasmic side of the membrane. The chain crosses the membrane as a helical span at residues 268 to 288 (IDPYIAVVAGALTTCNIPLAF). Residues 289 to 306 (LEPTISNWMKKTMNASEW) are Lumenal, vesicle-facing. N-linked (GlcNAc...) asparagine glycosylation is present at asparagine 302. The chain crosses the membrane as a helical span at residues 307-327 (QMGITWLPAFFPHILGVYITV). The Cytoplasmic portion of the chain corresponds to 328 to 337 (KLAAKYPNYQ). Residues 338–358 (WLYGAVGLVIIGASSCTIPAC) form a helical membrane-spanning segment. Topologically, residues 359–363 (RNFEE) are lumenal, vesicle. The chain crosses the membrane as a helical span at residues 364–384 (LIIPLCALCFGIALVDTALLP). Residues 385-400 (TLAFLVDIRYVSVYGS) are Cytoplasmic-facing. A helical membrane pass occupies residues 401–421 (VYAIADISYSVAYALGPIMAG). Residues 422-428 (QIVHDLG) lie on the Lumenal, vesicle side of the membrane. The chain crosses the membrane as a helical span at residues 429–449 (FVQLNLGMGLVNILYAPGLLF). Residues 450–511 (LRNVCQMKPS…VLSDQEGYSE (62 aa)) lie on the Cytoplasmic side of the membrane. The tract at residues 485–511 (EAKEPHGTSSGNHSVHAVLSDQEGYSE) is disordered.

Belongs to the major facilitator superfamily. Vesicular transporter family. High expression in the electric lobe of the brain.

It is found in the membrane. Functionally, involved in acetylcholine transport into synaptic vesicles. The sequence is that of Vesicular acetylcholine transporter from Torpedo marmorata (Marbled electric ray).